The chain runs to 311 residues: Metal-staphylopine import system permease protein CntB (311 aa).

6 consecutive transmembrane segments (helical) span residues 9-29 (IALM…LTYI), 105-125 (LTII…VVSA), 139-159 (VAFF…IIYV), 173-193 (GPES…GIYF), 237-257 (IFCM…YIFA), and 274-294 (FPVI…FNTL). The ABC transmembrane type-1 domain occupies 99–295 (FMNTLKLTII…VLFIVFNTLA (197 aa)).

This sequence belongs to the binding-protein-dependent transport system permease family. As to quaternary structure, the complex is composed of two ATP-binding proteins (CntD and CntF), two transmembrane proteins (CntB and CntC) and a solute-binding protein (CntA).

Its subcellular location is the cell membrane. Its activity is regulated as follows. Nickel/cobalt import is reduced in the presence of zinc. Its function is as follows. Part of the ABC transporter complex CntABCDF (Opp1) involved in the uptake of metal in complex with the metallophore staphylopine (StP). Involved in the import of divalent metals ions such as nickel, cobalt and zinc. Probably responsible for the translocation of the substrate across the membrane. Plays a major role in nickel/cobalt import in zinc-depleted conditions. Contributes to virulence. Required for full urease activity in vitro. This Staphylococcus aureus (strain NCTC 8325 / PS 47) protein is Metal-staphylopine import system permease protein CntB.